The primary structure comprises 165 residues: Large ribosomal subunit protein uL10 (165 aa).

The protein belongs to the universal ribosomal protein uL10 family. As to quaternary structure, part of the ribosomal stalk of the 50S ribosomal subunit. The N-terminus interacts with L11 and the large rRNA to form the base of the stalk. The C-terminus forms an elongated spine to which L12 dimers bind in a sequential fashion forming a multimeric L10(L12)X complex.

In terms of biological role, forms part of the ribosomal stalk, playing a central role in the interaction of the ribosome with GTP-bound translation factors. The protein is Large ribosomal subunit protein uL10 of Serratia proteamaculans (strain 568).